The primary structure comprises 354 residues: Replication-associated protein (354 aa).

A CRESS-DNA virus Rep endonuclease domain is found at 11-114 (SHRSPNTFLT…PLALFERGTF (104 aa)). An RCR-1 motif is present at residues 18 to 21 (FLTY). A divalent metal cation is bound by residues glutamate 52 and histidine 62. An RCR-2 motif is present at residues 60–65 (CLHALI). Tyrosine 100 acts as the For DNA cleavage activity in catalysis. Positions 100 to 103 (YITK) match the RCR-3 motif. Glutamate 104 serves as a coordination point for a divalent metal cation. The tract at residues 175 to 187 (SANKLFPDIQEEF) is oligomerization. 228–235 (GPTRTGKS) lines the ATP pocket. A transactivation region spans residues 251-269 (VDWSSYNEDTIYNIVDDIP). A Nuclear localization signal motif is present at residues 291 to 302 (KYGKKKKVQMKS).

This sequence belongs to the geminiviridae Rep protein family. As to quaternary structure, homooligomer. Rep binds to repeated DNA motifs (iterons). Forms the O-complex, which is a Rep-DNA complex involved in the initiation of RCR. Part of the C- and V-complexes which are RepA-Rep-DNA complexes involved in the c-sense and v-sense transcription. Mg(2+) serves as cofactor. Mn(2+) is required as a cofactor.

The protein resides in the host nucleus. In terms of biological role, essential for the replication of viral ssDNA. The closed circular ssDNA genome is first converted to a superhelical dsDNA. Rep binds a specific region at the genome origin of replication. It introduces an endonucleolytic nick within the conserved sequence 5'-TAATATTAC-3' in the intergenic region of the genome present in all geminiviruses, thereby initiating the rolling circle replication (RCR). Following cleavage, binds covalently to the 5'-phosphate of DNA as a tyrosyl ester. The cleavage gives rise to a free 3'-OH that serves as a primer for the cellular DNA polymerase. The polymerase synthesizes the (+) strand DNA by rolling circle mechanism. After one round of replication, a Rep-catalyzed nucleotidyl transfer reaction releases a circular single-stranded virus genome, thereby terminating the replication. Displays origin-specific DNA cleavage, nucleotidyl transferase, ATPase and helicase activities. Acts as an inhibitor of C-sense gene transcription. The protein is Replication-associated protein of Maize streak virus genotype C (isolate Set) (MSV).